Here is a 341-residue protein sequence, read N- to C-terminus: tRNA N6-adenosine threonylcarbamoyltransferase (341 aa).

Residues histidine 118 and histidine 122 each coordinate Fe cation. Residues 141 to 145, aspartate 174, glycine 187, and asparagine 281 contribute to the substrate site; that span reads LVSGG. A Fe cation-binding site is contributed by aspartate 309.

Belongs to the KAE1 / TsaD family. Requires Fe(2+) as cofactor.

Its subcellular location is the cytoplasm. The enzyme catalyses L-threonylcarbamoyladenylate + adenosine(37) in tRNA = N(6)-L-threonylcarbamoyladenosine(37) in tRNA + AMP + H(+). Its function is as follows. Required for the formation of a threonylcarbamoyl group on adenosine at position 37 (t(6)A37) in tRNAs that read codons beginning with adenine. Is involved in the transfer of the threonylcarbamoyl moiety of threonylcarbamoyl-AMP (TC-AMP) to the N6 group of A37, together with TsaE and TsaB. TsaD likely plays a direct catalytic role in this reaction. This chain is tRNA N6-adenosine threonylcarbamoyltransferase, found in Desulfitobacterium hafniense (strain Y51).